A 49-amino-acid polypeptide reads, in one-letter code: MFKRKSTAELAAQMAKLNGNKGFSSEDKGEWKLKLDNAGNGQAVIRFLP.

As to quaternary structure, homodimer in the absence of DNA, monomer when binding DNA.

Functionally, binds preferentially to single-stranded DNA and therefore, destabilizes double-stranded DNA. It is involved in DNA replication, repair and recombination. Binds ss-DNA as the replication fork advances and stimulates the replisome processivity and accuracy. This Enterobacteria phage RB9 (Bacteriophage RB9) protein is Single-stranded DNA-binding protein (32).